A 431-amino-acid chain; its full sequence is Adenylosuccinate synthetase (431 aa).

GTP-binding positions include 13–19 (GDEGKGK) and 41–43 (GHT). The active-site Proton acceptor is the aspartate 14. Mg(2+)-binding residues include aspartate 14 and glycine 41. IMP is bound by residues 14 to 17 (DEGK), 39 to 42 (NAGH), threonine 130, arginine 144, glutamine 225, threonine 240, and arginine 304. Histidine 42 acts as the Proton donor in catalysis. 300 to 306 (ATTHRPR) contributes to the substrate binding site. Residues arginine 306, 332–334 (KLD), and 414–416 (STG) each bind GTP.

This sequence belongs to the adenylosuccinate synthetase family. Homodimer. Mg(2+) is required as a cofactor.

It is found in the cytoplasm. The catalysed reaction is IMP + L-aspartate + GTP = N(6)-(1,2-dicarboxyethyl)-AMP + GDP + phosphate + 2 H(+). Its pathway is purine metabolism; AMP biosynthesis via de novo pathway; AMP from IMP: step 1/2. In terms of biological role, plays an important role in the de novo pathway of purine nucleotide biosynthesis. Catalyzes the first committed step in the biosynthesis of AMP from IMP. The chain is Adenylosuccinate synthetase from Nitrosococcus oceani (strain ATCC 19707 / BCRC 17464 / JCM 30415 / NCIMB 11848 / C-107).